We begin with the raw amino-acid sequence, 137 residues long: uncharacterized protein (137 aa).

This sequence belongs to the ycf72 family.

Its subcellular location is the plastid. It is found in the chloroplast. This is an uncharacterized protein from Zea mays (Maize).